Consider the following 1004-residue polypeptide: Protein CHUP1, chloroplastic (1004 aa).

The interval 1–25 is required for chloroplast localization; sequence MFVRIGFVVAASIAAVTVKRLNVKP. The tract at residues 22 to 63 is disordered; that stretch reads NVKPSKPSKPSDNGEGGDKEQSVDPDYNLNDKNLQEEEEEEE. Positions 123–341 form a coiled coil; the sequence is EMAYNDGELE…KQVEGLQMNR (219 aa). The segment at 269–290 is leucine-zipper 1; that stretch reads LEVQVMELKRKNRELQHEKREL. Disordered regions lie at residues 398–482, 504–536, 612–718, and 736–755; these read GSER…SMNK, FGQV…GEGL, TATG…GNKV, and SKKE…SSAA. Ser399 is modified (phosphoserine). Polar residues predominate over residues 409 to 419; it reads ESNYSQPSSPG. Residues 427-439 are compositionally biased toward low complexity; it reads SMDSSTSRFSSFS. 2 stretches are compositionally biased toward polar residues: residues 504–517 and 612–624; these read FGQV…TPET and TATG…SNES. Positions 670–706 are enriched in pro residues; that stretch reads ARPPLPGGGPPPPPPPPGGGPPPPPGGGPPPPPPPPG. A compositionally biased stretch (polar residues) spans 744 to 755; it reads LISSGTGNSSAA. The tract at residues 802–823 is leucine-zipper 2; that stretch reads LLAFVSWLDEELSFLVDERAVL. The tract at residues 979 to 1004 is disordered; it reads RSRAKTESGDNNNNNNNNSNEEESVN.

As to expression, expressed in cauline leaves, rosette leaves, stems and flowers, but not in roots.

The protein resides in the plastid. The protein localises to the chloroplast outer membrane. In terms of biological role, required for the positioning and movement of chloroplasts. Interacts with profilin and actin independent of its polymerization status. Regulates chloroplast localization by anchoring chloroplasts to the plasma membrane and forming a bridge to the actin cytoskeleton. The protein is Protein CHUP1, chloroplastic (CHUP1) of Arabidopsis thaliana (Mouse-ear cress).